The primary structure comprises 697 residues: Portal protein (697 aa).

A disordered region spans residues 633-697 (MSREAAGGVP…RRAGGPYGFH (65 aa)). Residues 664–689 (ITADEERRGPERVGRFRNGGPDDPRR) show a composition bias toward basic and acidic residues.

Belongs to the herpesviridae portal protein family. As to quaternary structure, homododecamerizes. Interacts with terminase subunits TRM1 and TRM3.

It is found in the virion. It localises to the host nucleus. In terms of biological role, forms a portal in the viral capsid through which viral DNA is translocated during DNA packaging. Assembles as a dodecamer at a single fivefold axe of the T=16 icosahedric capsid. Binds to the molecular motor that translocates the viral DNA, termed terminase. This chain is Portal protein (UL104), found in Homo sapiens (Human).